A 465-amino-acid polypeptide reads, in one-letter code: Mothers against decapentaplegic homolog 1 (465 aa).

At M1 the chain carries N-acetylmethionine. The 125-residue stretch at 12–136 (PAVKRLLGWK…YKRVESPVLP (125 aa)) folds into the MH1 domain. C64, C109, C121, and H126 together coordinate Zn(2+). The tract at residues 162-248 (NEPHMPLNAT…SQPMDTNMMA (87 aa)) is disordered. Positions 179-210 (PNSHPFPHSPNSSYPNSPGSSSSTYPHSPTSS) are enriched in low complexity. Positions 221–232 (DTPPPAYLPPED) are enriched in pro residues. Positions 271 to 465 (WCSIVYYELN…SPHNPISSVS (195 aa)) constitute an MH2 domain. T322 carries the phosphothreonine; by MINK1, TNIK and MAP4K4 modification. The interval 418 to 428 (KGWGAEYHRQD) is L3 loop. Residues S463 and S465 each carry the phosphoserine modification.

It belongs to the dwarfin/SMAD family. In terms of assembly, found in a complex with SMAD4 and YY1. Interacts with HGS, NANOG and ZCCHC12. Upon C-terminus phosphorylation: forms trimers with another SMAD1 and the co-SMAD SMAD4. Interacts with PEBP2-alpha subunit, CREB-binding protein (CBP), p300, SMURF1, SMURF2, USP15 and HOXC8. Associates with ZNF423 or ZNF521 in response to BMP2 leading to activate transcription of BMP target genes. Interacts with SKOR1. Interacts (via MH2 domain) with LEMD3. Binding to LEMD3 results in at least a partial reduction of receptor-mediated phosphorylation. Forms a ternary complex with PSMB4 and OAZ1 before PSMB4 is incorporated into the 20S proteasome. Interacts (via MH2 domain) with FAM83G (via MH2 domain); in a SMAD4-independent manner. Interacts with ZC3H3. Interacts with TMEM119. Interacts (via MH1 and MH2 domains) with ZNF8. Interacts with RANBP3L; the interaction increases when SMAD1 is not phosphorylated and mediates SMAD1 nuclear export. Interacts with EGR1; this interaction inhibits SMAD1 dephosphorylation. Interacts with SMAD6. Interacts with YAP1. Interacts with MTMR4; negatively regulates BMP signaling through SMAD1 dephosphorylation and retention in endosomes. Post-translationally, phosphorylation of the C-terminal SVS motif by BMP type 1 receptor kinase activates SMAD1 by promoting dissociation from the receptor and trimerization with SMAD4. Phosphorylation by ERK2 MAP kinase in response to EGF or HGF prevents SMAD1 nuclear accumulation and transcriptional activity in response to BMP. Dephosphorylation, probably by PPM1A, induces its export from the nucleus to the cytoplasm. Dephosphorylation is inhibited by association with EGR1. Phosphorylation by CDK8/9 creates binding sites for YAP1, and subsequent phosphorylation by GSK3 switches off YAP1 binding and adds binding sites for SMURF1. In terms of processing, ubiquitinated by SMAD-specific E3 ubiquitin ligase SMURF1, leading to its degradation. Monoubiquitinated, leading to prevent DNA-binding. Deubiquitination by USP15 alleviates inhibition and promotes activation of TGF-beta target genes. Dephosphorylation, probably by PPM1A, induces its export from the nucleus to the cytoplasm. Phospho-SMAD1 is ubiquitinated by CHIP leading to disruption of the SMAD1-SMAD4 complex. In terms of tissue distribution, ubiquitous. Highest expression seen in the heart and skeletal muscle.

The protein resides in the cytoplasm. It is found in the nucleus. In terms of biological role, transcriptional modulator that plays a role in various cellular processes, including embryonic development, cell differentiation, and tissue homeostasis. Upon BMP ligand binding to their receptors at the cell surface, is phosphorylated by activated type I BMP receptors (BMPRIs) and associates with SMAD4 to form a heteromeric complex which translocates into the nucleus acting as transcription factor. In turn, the hetero-trimeric complex recognizes cis-regulatory elements containing Smad Binding Elements (SBEs) to modulate the outcome of the signaling network. SMAD1/OAZ1/PSMB4 complex mediates the degradation of the CREBBP/EP300 repressor SNIP1. Positively regulates BMP4-induced expression of odontogenic development regulator MSX1 following IPO7-mediated nuclear import. The chain is Mothers against decapentaplegic homolog 1 (SMAD1) from Homo sapiens (Human).